Reading from the N-terminus, the 333-residue chain is D-fructose 1,6-bisphosphatase class 2/sedoheptulose 1,7-bisphosphatase (333 aa).

Residues Asp-33, Glu-57, Asp-85, and Glu-88 each contribute to the Mn(2+) site. Substrate is bound by residues 88–90 (EGT), Tyr-119, 164–166 (RTR), and 186–188 (DGD). Glu-213 is a binding site for Mn(2+).

It belongs to the FBPase class 2 family. As to quaternary structure, homotetramer. The cofactor is Mn(2+).

The enzyme catalyses beta-D-fructose 1,6-bisphosphate + H2O = beta-D-fructose 6-phosphate + phosphate. It carries out the reaction D-sedoheptulose 1,7-bisphosphate + H2O = D-sedoheptulose 7-phosphate + phosphate. It functions in the pathway carbohydrate biosynthesis; Calvin cycle. Functionally, catalyzes the hydrolysis of fructose 1,6-bisphosphate (Fru 1,6-P2) and sedoheptulose 1,7-bisphosphate (Sed 1,7-P2) to fructose 6-phosphate and sedoheptulose 7-phosphate, respectively. This is D-fructose 1,6-bisphosphatase class 2/sedoheptulose 1,7-bisphosphatase from Prochlorococcus marinus (strain MIT 9312).